Here is a 674-residue protein sequence, read N- to C-terminus: DNA ligase (674 aa).

NAD(+)-binding positions include 42-46 (DNVYD), 91-92 (SM), and glutamate 121. Lysine 123 serves as the catalytic N6-AMP-lysine intermediate. NAD(+) is bound by residues arginine 144, glutamate 178, lysine 294, and lysine 318. Zn(2+) contacts are provided by cysteine 412, cysteine 415, cysteine 430, and cysteine 435. The 79-residue stretch at 596–674 (VKDSFVAGKT…ETELLANLKD (79 aa)) folds into the BRCT domain.

The protein belongs to the NAD-dependent DNA ligase family. LigA subfamily. The cofactor is Mg(2+). It depends on Mn(2+) as a cofactor.

It catalyses the reaction NAD(+) + (deoxyribonucleotide)n-3'-hydroxyl + 5'-phospho-(deoxyribonucleotide)m = (deoxyribonucleotide)n+m + AMP + beta-nicotinamide D-nucleotide.. Functionally, DNA ligase that catalyzes the formation of phosphodiester linkages between 5'-phosphoryl and 3'-hydroxyl groups in double-stranded DNA using NAD as a coenzyme and as the energy source for the reaction. It is essential for DNA replication and repair of damaged DNA. In Lacticaseibacillus paracasei (strain ATCC 334 / BCRC 17002 / CCUG 31169 / CIP 107868 / KCTC 3260 / NRRL B-441) (Lactobacillus paracasei), this protein is DNA ligase.